Here is a 375-residue protein sequence, read N- to C-terminus: Growth/differentiation factor 8 (375 aa).

An N-terminal signal peptide occupies residues 1–18; the sequence is MQKLQISVYIYLFMLIVA. Residues 19-266 constitute a propeptide that is removed on maturation; it reads GPVDLNEKSE…VTDTPKRSRR (248 aa). N-linked (GlcNAc...) asparagine glycosylation is found at N47 and N71. Intrachain disulfides connect C272–C282, C281–C340, C309–C372, and C313–C374.

Belongs to the TGF-beta family. In terms of assembly, homodimer; disulfide-linked. Interacts with WFIKKN2, leading to inhibit its activity. Interacts with FSTL3. Synthesized as large precursor molecule that undergoes proteolytic cleavage to generate an N-terminal propeptide and a disulfide linked C-terminal dimer, which is the biologically active molecule. The circulating form consists of a latent complex of the C-terminal dimer and other proteins, including its propeptide, which maintain the C-terminal dimer in a latent, inactive state. Ligand activation requires additional cleavage of the prodomain by a tolloid-like metalloproteinase.

It is found in the secreted. Functionally, acts specifically as a negative regulator of skeletal muscle growth. The sequence is that of Growth/differentiation factor 8 (MSTN) from Taurotragus derbianus (Giant eland).